A 343-amino-acid polypeptide reads, in one-letter code: MDISLFDYDLPEELIAKYPVNPRHSAKLMVLDRKSSNITHSTFWHIDEFLEEGDLLIFNDTKVLPARLLGKKKGIENSNVEILLLRHLENEKWEALVGGKNIKPGLVIEISYDFEAIVESQIEKSKFLVLLKAKNQNQIEAINKYGKIPIPPYLGRDEEPIDKEFYQTVFAKKEFSVAAPTASLHFSNELLEKLKKKVNIDFVTLHVSYGTFKPVTVQNIEEHKVDEEYIEVSESLIKNIKKTKKMCKRVIAVGTTVTRALETAIDKPYFGFTDLYIKPGFKFKVLDGFITNFHLPKSSLLILVSAFCNEENLDGREFILKSYKEAVKHKYRFYSYGDGMLIL.

The protein belongs to the QueA family. In terms of assembly, monomer.

The protein localises to the cytoplasm. The enzyme catalyses 7-aminomethyl-7-carbaguanosine(34) in tRNA + S-adenosyl-L-methionine = epoxyqueuosine(34) in tRNA + adenine + L-methionine + 2 H(+). Its pathway is tRNA modification; tRNA-queuosine biosynthesis. Transfers and isomerizes the ribose moiety from AdoMet to the 7-aminomethyl group of 7-deazaguanine (preQ1-tRNA) to give epoxyqueuosine (oQ-tRNA). This chain is S-adenosylmethionine:tRNA ribosyltransferase-isomerase, found in Hydrogenobaculum sp. (strain Y04AAS1).